Reading from the N-terminus, the 473-residue chain is 3-isopropylmalate dehydratase large subunit (473 aa).

[4Fe-4S] cluster-binding residues include Cys-354, Cys-414, and Cys-417.

This sequence belongs to the aconitase/IPM isomerase family. LeuC type 1 subfamily. As to quaternary structure, heterodimer of LeuC and LeuD. The cofactor is [4Fe-4S] cluster.

The catalysed reaction is (2R,3S)-3-isopropylmalate = (2S)-2-isopropylmalate. The protein operates within amino-acid biosynthesis; L-leucine biosynthesis; L-leucine from 3-methyl-2-oxobutanoate: step 2/4. Catalyzes the isomerization between 2-isopropylmalate and 3-isopropylmalate, via the formation of 2-isopropylmaleate. The protein is 3-isopropylmalate dehydratase large subunit of Rhodopseudomonas palustris (strain BisB18).